A 295-amino-acid chain; its full sequence is 4-hydroxy-tetrahydrodipicolinate synthase 1 (295 aa).

Pyruvate is bound at residue Thr46. The active-site Proton donor/acceptor is the Tyr134. Lys162 (schiff-base intermediate with substrate) is an active-site residue. Val204 contributes to the pyruvate binding site.

This sequence belongs to the DapA family. Homotetramer; dimer of dimers.

Its subcellular location is the cytoplasm. The catalysed reaction is L-aspartate 4-semialdehyde + pyruvate = (2S,4S)-4-hydroxy-2,3,4,5-tetrahydrodipicolinate + H2O + H(+). Its pathway is amino-acid biosynthesis; L-lysine biosynthesis via DAP pathway; (S)-tetrahydrodipicolinate from L-aspartate: step 3/4. Catalyzes the condensation of (S)-aspartate-beta-semialdehyde [(S)-ASA] and pyruvate to 4-hydroxy-tetrahydrodipicolinate (HTPA). The chain is 4-hydroxy-tetrahydrodipicolinate synthase 1 from Halalkalibacterium halodurans (strain ATCC BAA-125 / DSM 18197 / FERM 7344 / JCM 9153 / C-125) (Bacillus halodurans).